Consider the following 80-residue polypeptide: uncharacterized protein (80 aa).

This is an uncharacterized protein from Methanothermobacter thermautotrophicus (Methanobacterium thermoformicicum).